A 248-amino-acid polypeptide reads, in one-letter code: tRNA (guanine-N(1)-)-methyltransferase (248 aa).

S-adenosyl-L-methionine is bound by residues Gly-116 and 136 to 141; that span reads VGDYVL.

This sequence belongs to the RNA methyltransferase TrmD family. Homodimer.

The protein resides in the cytoplasm. It carries out the reaction guanosine(37) in tRNA + S-adenosyl-L-methionine = N(1)-methylguanosine(37) in tRNA + S-adenosyl-L-homocysteine + H(+). Specifically methylates guanosine-37 in various tRNAs. In Psychromonas ingrahamii (strain DSM 17664 / CCUG 51855 / 37), this protein is tRNA (guanine-N(1)-)-methyltransferase.